The following is a 352-amino-acid chain: tRNA N6-adenosine threonylcarbamoyltransferase (352 aa).

His117 and His121 together coordinate Fe cation. Substrate is bound by residues 140 to 144 (LVSGG), Asp173, Gly186, and Asn287. Residue Asp315 participates in Fe cation binding.

It belongs to the KAE1 / TsaD family. Fe(2+) is required as a cofactor.

It localises to the cytoplasm. It catalyses the reaction L-threonylcarbamoyladenylate + adenosine(37) in tRNA = N(6)-L-threonylcarbamoyladenosine(37) in tRNA + AMP + H(+). Required for the formation of a threonylcarbamoyl group on adenosine at position 37 (t(6)A37) in tRNAs that read codons beginning with adenine. Is involved in the transfer of the threonylcarbamoyl moiety of threonylcarbamoyl-AMP (TC-AMP) to the N6 group of A37, together with TsaE and TsaB. TsaD likely plays a direct catalytic role in this reaction. This is tRNA N6-adenosine threonylcarbamoyltransferase from Psychrobacter cryohalolentis (strain ATCC BAA-1226 / DSM 17306 / VKM B-2378 / K5).